The primary structure comprises 273 residues: ATP synthase subunit a (273 aa).

5 consecutive transmembrane segments (helical) span residues 42–62 (TLNIDSLFFSVVLGALFLFIF), 102–122 (VIAPLALTVFVWVFLMNMMDL), 148–168 (DVSITLSMALGVFILILFYSI), 213–233 (LFGNMYAGELIFILIAGLLPW), and 244–264 (AIFHILIITLQAFIFMVLTIV).

This sequence belongs to the ATPase A chain family. F-type ATPases have 2 components, CF(1) - the catalytic core - and CF(0) - the membrane proton channel. CF(1) has five subunits: alpha(3), beta(3), gamma(1), delta(1), epsilon(1). CF(0) has three main subunits: a(1), b(2) and c(9-12). The alpha and beta chains form an alternating ring which encloses part of the gamma chain. CF(1) is attached to CF(0) by a central stalk formed by the gamma and epsilon chains, while a peripheral stalk is formed by the delta and b chains.

It is found in the cell inner membrane. In terms of biological role, key component of the proton channel; it plays a direct role in the translocation of protons across the membrane. The protein is ATP synthase subunit a of Serratia proteamaculans (strain 568).